A 600-amino-acid chain; its full sequence is Probable methyltransferase PMT21 (600 aa).

Residues 1 to 16 (MKYKDEKYEKAEKGSR) lie on the Cytoplasmic side of the membrane. Residues 17 to 37 (ILPKTVLLILLCGLSFYLGGL) form a helical; Signal-anchor for type II membrane protein membrane-spanning segment. Topologically, residues 38-600 (YCGKNIIEVS…YSSNASSETN (563 aa)) are lumenal. N594 carries an N-linked (GlcNAc...) asparagine glycan.

This sequence belongs to the methyltransferase superfamily.

The protein resides in the endoplasmic reticulum membrane. The protein is Probable methyltransferase PMT21 (ERD3) of Arabidopsis thaliana (Mouse-ear cress).